The sequence spans 352 residues: Molybdenum import ATP-binding protein ModC (352 aa).

Positions 1-229 (MLELNFSQTL…SVMHPWLPKE (229 aa)) constitute an ABC transporter domain. An ATP-binding site is contributed by 31–38 (GVSGAGKT). One can recognise a Mop domain in the interval 289–352 (QTSIRNVLRA…AQVKSVSITA (64 aa)).

It belongs to the ABC transporter superfamily. Molybdate importer (TC 3.A.1.8) family. As to quaternary structure, the complex is composed of two ATP-binding proteins (ModC), two transmembrane proteins (ModB) and a solute-binding protein (ModA).

It localises to the cell inner membrane. The catalysed reaction is molybdate(out) + ATP + H2O = molybdate(in) + ADP + phosphate + H(+). Its function is as follows. Part of the ABC transporter complex ModABC involved in molybdenum import. Responsible for energy coupling to the transport system. The chain is Molybdenum import ATP-binding protein ModC from Salmonella paratyphi A (strain ATCC 9150 / SARB42).